A 216-amino-acid chain; its full sequence is Phosphatidylserine decarboxylase proenzyme (216 aa).

The Schiff-base intermediate with substrate; via pyruvic acid role is filled by Ser-182. The residue at position 182 (Ser-182) is a Pyruvic acid (Ser); by autocatalysis.

This sequence belongs to the phosphatidylserine decarboxylase family. PSD-A subfamily. Heterodimer of a large membrane-associated beta subunit and a small pyruvoyl-containing alpha subunit. The cofactor is pyruvate. Is synthesized initially as an inactive proenzyme. Formation of the active enzyme involves a self-maturation process in which the active site pyruvoyl group is generated from an internal serine residue via an autocatalytic post-translational modification. Two non-identical subunits are generated from the proenzyme in this reaction, and the pyruvate is formed at the N-terminus of the alpha chain, which is derived from the carboxyl end of the proenzyme. The post-translation cleavage follows an unusual pathway, termed non-hydrolytic serinolysis, in which the side chain hydroxyl group of the serine supplies its oxygen atom to form the C-terminus of the beta chain, while the remainder of the serine residue undergoes an oxidative deamination to produce ammonia and the pyruvoyl prosthetic group on the alpha chain.

The protein resides in the cell membrane. The catalysed reaction is a 1,2-diacyl-sn-glycero-3-phospho-L-serine + H(+) = a 1,2-diacyl-sn-glycero-3-phosphoethanolamine + CO2. Its pathway is phospholipid metabolism; phosphatidylethanolamine biosynthesis; phosphatidylethanolamine from CDP-diacylglycerol: step 2/2. Functionally, catalyzes the formation of phosphatidylethanolamine (PtdEtn) from phosphatidylserine (PtdSer). This is Phosphatidylserine decarboxylase proenzyme from Burkholderia mallei (strain NCTC 10247).